A 464-amino-acid chain; its full sequence is GTPase Der (464 aa).

EngA-type G domains lie at 3 to 166 (PTIA…AVES) and 177 to 350 (LKMA…QAAT). Residues 9–16 (GRPNVGKS), 56–60 (DTGGI), 118–121 (NKVD), 183–190 (GRPNVGKS), 230–234 (DTAGV), and 295–298 (NKWD) each bind GTP. A KH-like domain is found at 351–435 (EKYSTSFLTR…PVRIEYRSGD (85 aa)).

Belongs to the TRAFAC class TrmE-Era-EngA-EngB-Septin-like GTPase superfamily. EngA (Der) GTPase family. Associates with the 50S ribosomal subunit.

GTPase that plays an essential role in the late steps of ribosome biogenesis. This chain is GTPase Der, found in Teredinibacter turnerae (strain ATCC 39867 / T7901).